The primary structure comprises 302 residues: Beta-lactamase (302 aa).

The span at 1 to 11 shows a compositional bias: basic residues; it reads MADRRRVHAWA. An N-terminal signal peptide occupies residues 1–29; that stretch reads MADRRRVHAWARARPAAPEPAPPTPSAAA. Residues 1-43 are disordered; that stretch reads MADRRRVHAWARARPAAPEPAPPTPSAAAPSVAPGPAATPPDP. Residues 26 to 36 show a composition bias toward low complexity; the sequence is SAAAPSVAPGP. Catalysis depends on Ser-85, which acts as the Acyl-ester intermediate. Ser-143 is a substrate binding site. Glu-179 functions as the Proton acceptor in the catalytic mechanism. Residue 247-249 coordinates substrate; that stretch reads KTG.

The protein belongs to the class-A beta-lactamase family.

It is found in the secreted. The catalysed reaction is a beta-lactam + H2O = a substituted beta-amino acid. Its function is as follows. Active on penicillins but not on cephalosporins. In Amycolatopsis lactamdurans (Nocardia lactamdurans), this protein is Beta-lactamase (bla).